A 258-amino-acid polypeptide reads, in one-letter code: Adenylate kinase (258 aa).

52–57 (GAGKGT) is a binding site for ATP. The segment at 72 to 101 (ATGDMLRSQVAKKTALGKEAKKIMDQGGLV) is NMP. AMP is bound by residues Thr73, Arg78, 99–101 (GLV), 128–131 (GFPR), and Gln135. Residues 169-206 (GRLVHPASGRSYHKIFNPPKEEMKDDVTGEPLIQRSDD) form an LID region. Residues Arg170 and 179–180 (SY) contribute to the ATP site. AMP-binding residues include Arg203 and Arg214. Residue Gln242 participates in ATP binding.

It belongs to the adenylate kinase family. AK2 subfamily. In terms of assembly, monomer.

Its subcellular location is the cytoplasm. It localises to the cytosol. The protein resides in the mitochondrion intermembrane space. The catalysed reaction is AMP + ATP = 2 ADP. Functionally, catalyzes the reversible transfer of the terminal phosphate group between ATP and AMP. Plays an important role in cellular energy homeostasis and in adenine nucleotide metabolism. Adenylate kinase activity is critical for regulation of the phosphate utilization and the AMP de novo biosynthesis pathways. This chain is Adenylate kinase (adk1), found in Aspergillus niger (strain ATCC MYA-4892 / CBS 513.88 / FGSC A1513).